The sequence spans 56 residues: Small ribosomal subunit protein uS14 (56 aa).

Positions 21, 24, 39, and 42 each coordinate Zn(2+).

It belongs to the universal ribosomal protein uS14 family. Zn(2+) serves as cofactor.

The chain is Small ribosomal subunit protein uS14 (RPS29) from Debaryomyces hansenii (strain ATCC 36239 / CBS 767 / BCRC 21394 / JCM 1990 / NBRC 0083 / IGC 2968) (Yeast).